A 69-amino-acid chain; its full sequence is MKNLLICIIKMYRKYISSLKRPSCRFYPTCSQYSIEAIEKYGALKGTLISIKRILKCHPFNEGGYDPVK.

This sequence belongs to the UPF0161 family.

The protein resides in the cell membrane. In terms of biological role, could be involved in insertion of integral membrane proteins into the membrane. The chain is Putative membrane protein insertion efficiency factor from Clostridium botulinum (strain 657 / Type Ba4).